Reading from the N-terminus, the 297-residue chain is Urease accessory protein UreD (297 aa).

The segment at 1–41 (MPQAADIATAPQRPSAPGDVVAAGQPPRARGRAHVSSKRRD) is disordered.

The protein belongs to the UreD family. In terms of assembly, ureD, UreF and UreG form a complex that acts as a GTP-hydrolysis-dependent molecular chaperone, activating the urease apoprotein by helping to assemble the nickel containing metallocenter of UreC. The UreE protein probably delivers the nickel.

It is found in the cytoplasm. Required for maturation of urease via the functional incorporation of the urease nickel metallocenter. The chain is Urease accessory protein UreD from Ruegeria sp. (strain TM1040) (Silicibacter sp.).